We begin with the raw amino-acid sequence, 698 residues long: Voltage-dependent calcium channel beta subunit-associated regulatory protein (698 aa).

The Extracellular portion of the chain corresponds to 1-41 (MQPTATMATAAATTATVALTTSWDNATSRPTAEPDPILDNY). An N-linked (GlcNAc...) asparagine glycan is attached at Asn-25. Residues 42 to 62 (VLLVVVMSLFVGGTLVVLSGV) form a helical; Signal-anchor for type III membrane protein membrane-spanning segment. Residues 63-698 (LLLCKRCWEV…APTSPDHSPA (636 aa)) are Cytoplasmic-facing. 2 disordered regions span residues 90–124 (YLDN…TSST) and 185–275 (ASAA…SSGS). The span at 185–197 (ASAAATPHPATTS) shows a compositional bias: low complexity. Residues Ser-290 and Ser-295 each carry the phosphoserine modification. 4 disordered regions span residues 308–339 (SQRA…EQEG), 360–421 (PPPR…HAQC), 438–536 (ATAS…RRDY), and 554–648 (PHFD…GSGL). Over residues 360-375 (PPPRPFLASPTSPPPT) the composition is skewed to pro residues. The span at 402-413 (PEHAQQQDPQQE) shows a compositional bias: low complexity. The segment covering 459–468 (SGSGSGGGGA) has biased composition (gly residues). Positions 471-482 (AFPPPPESPPAL) are enriched in pro residues. The segment covering 483–493 (RPKDGEARRLL) has biased composition (basic and acidic residues). Residues Ser-501, Ser-520, and Ser-524 each carry the phosphoserine modification. Residues 562–576 (HRTRAHPHTHARKQW) are compositionally biased toward basic residues. Position 610 is a phosphoserine (Ser-610). Thr-691 carries the phosphothreonine modification. Ser-692 and Ser-696 each carry phosphoserine.

As to quaternary structure, interacts with voltage-dependent calcium channels CACNB1, CACNB2, CACNB3 and CACNB4 beta subunits; prevents their interaction with the CACNA1C alpha subunit thereby negatively regulating the activity of the corresponding calcium channels. As to expression, expressed by neurons in the cortex, cerebellum and hippocampus and by pancreatic beta cells (at protein level).

It localises to the cytoplasmic vesicle. Its subcellular location is the secretory vesicle. The protein localises to the synaptic vesicle membrane. The protein resides in the cell membrane. It is found in the cell projection. It localises to the growth cone. Functionally, negatively regulates voltage-gated calcium channels by preventing the interaction between their alpha and beta subunits. Thereby, negatively regulates calcium channels activity at the plasma membrane and indirectly inhibits calcium-regulated exocytosis. The chain is Voltage-dependent calcium channel beta subunit-associated regulatory protein from Mus musculus (Mouse).